Reading from the N-terminus, the 246-residue chain is UPF0736 protein GK0808 (246 aa).

The protein belongs to the UPF0736 family.

The protein is UPF0736 protein GK0808 of Geobacillus kaustophilus (strain HTA426).